We begin with the raw amino-acid sequence, 696 residues long: L-amino-acid oxidase (696 aa).

Residues 1-130 (MKWSAAAGAA…IKMRRDLKAR (130 aa)) constitute a propeptide that is removed on maturation. FAD contacts are provided by residues Glu-207, Arg-215, 236 to 237 (MR), and Val-440. Arg-237 is a substrate binding site. Tyr-564 contributes to the substrate binding site. Residues Glu-649 and 658-661 (IASA) contribute to the FAD site.

Belongs to the flavin monoamine oxidase family. It depends on FAD as a cofactor.

The enzyme catalyses an L-alpha-amino acid + O2 + H2O = a 2-oxocarboxylate + H2O2 + NH4(+). This is L-amino-acid oxidase (lox) from Neurospora crassa (strain ATCC 24698 / 74-OR23-1A / CBS 708.71 / DSM 1257 / FGSC 987).